Here is a 199-residue protein sequence, read N- to C-terminus: DnaJ homolog subfamily C member 5B (199 aa).

Serine 14 and serine 16 each carry phosphoserine. In terms of domain architecture, J spans 19-84; it reads SLYEILGLHK…SKRNIYDKYG (66 aa).

Interacts with the chaperone complex consisting of HSC70 and SGTA. Palmitoylated.

Its subcellular location is the membrane. The protein is DnaJ homolog subfamily C member 5B (Dnajc5b) of Mus musculus (Mouse).